The following is a 103-amino-acid chain: Growth-regulated alpha protein (103 aa).

The first 30 residues, 1–30 (MARAANPAPRLLGAAMLLLLLVAAGRRAAG), serve as a signal peptide directing secretion. Cystine bridges form between Cys39/Cys65 and Cys41/Cys81.

Belongs to the intercrine alpha (chemokine CxC) family.

The protein localises to the secreted. Functionally, has chemotactic activity for neutrophils. The chain is Growth-regulated alpha protein (CXCL1) from Ovis aries (Sheep).